A 99-amino-acid chain; its full sequence is High mobility group protein I (99 aa).

Residues 1–99 (MSDSPVKKGR…ADTEEVNSSD (99 aa)) form a disordered region. At S4 the chain carries Phosphoserine; by CDC2 and MAPK. The a.T hook 1 DNA-binding region spans 7–19 (KKGRGRPAKAKPE). The segment covering 16 to 46 (AKPEETASPKAAKKEEKKVEEVPKKIEESTK) has biased composition (basic and acidic residues). The residue at position 23 (S23) is a Phosphoserine; by MAPK. A DNA-binding region (a.T hook 2) is located at residues 54 to 66 (KKGRGRPSKGDKA). S73 carries the phosphoserine; by PKC modification. The segment at residues 74-86 (GKGRGRPAKNAKK) is a DNA-binding region (a.T hook 3). The span at 90 to 99 (ADTEEVNSSD) shows a compositional bias: acidic residues.

It belongs to the HMGA family. In terms of processing, phosphorylated in a cell-cycle dependent manner; substantially reduced in cells that have finished proliferating and are differentiated. Phosphorylation at Ser-4 and Ser-23 results in a 10-fold weakening of DNA-binding activity and altered the mode of protein-DNA interaction.

It is found in the nucleus. Its subcellular location is the nucleolus. The protein localises to the chromosome. Its function is as follows. Binds preferentially to the minor groove of A+T rich regions in double-stranded DNA via the second and third DBA-binding domains. It is suggested that these proteins could function in nucleosome phasing and in the 3'-end processing of mRNA transcripts. They are also involved in the transcription regulation of genes containing, or in close proximity to A+T-rich regions. This is High mobility group protein I from Chironomus tentans (Midge).